We begin with the raw amino-acid sequence, 470 residues long: Aminoacyl transferase sphA (470 aa).

S212, H244, and T272 together coordinate pyridoxal 5'-phosphate. K275 carries the N6-(pyridoxal phosphate)lysine modification.

Belongs to the class-II pyridoxal-phosphate-dependent aminotransferase family. BioF subfamily. Homodimer. Pyridoxal 5'-phosphate serves as cofactor.

The catalysed reaction is aminomalonate + (3R)-hydroxyoctadeca-4,10-dienoyl-[ACP] = 3-oxopresphingofungin + holo-[ACP] + CO2. It functions in the pathway secondary metabolite biosynthesis. Its function is as follows. Aminoacyl transferase; part of the gene cluster that mediates the biosynthesis of sphingofungins, bioactive molecules acting as sphingolipid inhibitors via inhibiting serine palmitoyl transferase (SPT). Within the pathway, sphA transfers aminomalonate onto the sphB product 3-hydroxyoctadeca-4,10-dienoyl-ACP to produce 3-keto-presphingofungin. The substrate specificity of sphA using only aminomalonate in Aspergillus fumigatus is responsible for the biosynthesis of sphingofungins B and C but not E and F like in Byssochlamys spectabilis. The PKS sphB does not contain any putative thioesterase domain for releasing the nascent polyketide chain and it has been suggested that aminoacyl transferases can facilitate the polyketide chain release. Sphingofungin biosynthesis starts with the PKS sphB that produces an C18 polyketide precursor 3-hydroxyoctadeca-4,10-dienoyl-ACP containing one delta-6 desaturation and one delta-12 desaturation. The aminoacyl transferase sphA uses the sphB product to produce 3-keto-presphingofungin by adding an aminomalonate molecule. SphF then reduces the C-3 ketone of 3-keto-presphingofungin which leads to presphingofungin. The cytochrome P450 monooxygenase sphH converts presphingofungin into sphingofungin B1 which is further converted to sphingofungin B by the dioxygenase sphC. SphC is also able to convert presphingofungin into sphingofungin B2. The acetyltransferase sphE acetylates sphingofungin B to produce sphingofungin C, but can also convert sphingofungin B1 into sphingofungin C1 and sphingofungin B2 into sphingofungin C2. Finally, sphingofungin C can be spontaneously converted into sphingofungin D. The chain is Aminoacyl transferase sphA from Aspergillus fumigatus (strain CBS 144.89 / FGSC A1163 / CEA10) (Neosartorya fumigata).